The sequence spans 828 residues: Leucine--tRNA ligase (828 aa).

The 'HIGH' region motif lies at 42–52 (PYPSGTLHVGH). A 'KMSKS' region motif is present at residues 582-586 (KMSKS). An ATP-binding site is contributed by lysine 585.

This sequence belongs to the class-I aminoacyl-tRNA synthetase family.

It localises to the cytoplasm. The catalysed reaction is tRNA(Leu) + L-leucine + ATP = L-leucyl-tRNA(Leu) + AMP + diphosphate. The sequence is that of Leucine--tRNA ligase from Petrotoga mobilis (strain DSM 10674 / SJ95).